Here is a 436-residue protein sequence, read N- to C-terminus: Testican-3 (436 aa).

An N-terminal signal peptide occupies residues 1–22; the sequence is MLKVSALLCVCAAAWCSQTLAA. 8 cysteine pairs are disulfide-bonded: cysteine 90–cysteine 101, cysteine 95–cysteine 111, cysteine 139–cysteine 169, cysteine 142–cysteine 162, cysteine 151–cysteine 183, cysteine 317–cysteine 341, cysteine 352–cysteine 359, and cysteine 361–cysteine 380. Residues 133–185 form the Kazal-like domain; it reads GLPSSTCKPCPIAYASPVCGSDGHSYSSQCKLEYQACVLGKQISIKCEGRCPC. In terms of domain architecture, Thyroglobulin type-1 spans 314 to 380; it reads DPPCHTELSN…GSRINGVADC (67 aa). O-linked (Xyl...) (glycosaminoglycan) serine glycosylation is found at serine 387 and serine 392. A disordered region spans residues 393 to 436; sequence GDFREWTDDEGEEDDIMNDKDDIEDDDEDEGDDDDDGDVHDGYI. The segment covering 399–430 has biased composition (acidic residues); the sequence is TDDEGEEDDIMNDKDDIEDDDEDEGDDDDDGD.

Post-translationally, contains chondroitin sulfate and heparan sulfate O-linked oligosaccharides. In terms of tissue distribution, expressed in brain.

The protein resides in the secreted. Its subcellular location is the extracellular space. It localises to the extracellular matrix. Its function is as follows. May participate in diverse steps of neurogenesis. Inhibits the processing of pro-matrix metalloproteinase 2 (MMP-2) by MT1-MMP and MT3-MMP. May interfere with tumor invasion. The polypeptide is Testican-3 (Spock3) (Mus musculus (Mouse)).